The primary structure comprises 333 residues: Ribosomal RNA small subunit methyltransferase H (333 aa).

Residues 39-41 (GGY), aspartate 57, phenylalanine 84, aspartate 101, and glutamine 108 contribute to the S-adenosyl-L-methionine site.

It belongs to the methyltransferase superfamily. RsmH family.

It localises to the cytoplasm. It catalyses the reaction cytidine(1402) in 16S rRNA + S-adenosyl-L-methionine = N(4)-methylcytidine(1402) in 16S rRNA + S-adenosyl-L-homocysteine + H(+). Functionally, specifically methylates the N4 position of cytidine in position 1402 (C1402) of 16S rRNA. The sequence is that of Ribosomal RNA small subunit methyltransferase H from Dinoroseobacter shibae (strain DSM 16493 / NCIMB 14021 / DFL 12).